Reading from the N-terminus, the 121-residue chain is Histone H2A.Z-specific chaperone CHZ1 (121 aa).

The disordered stretch occupies residues 1–121 (MASEETGVTA…DAEDDKMDED (121 aa)). 2 stretches are compositionally biased toward acidic residues: residues 40–70 (EMDE…DEID) and 97–121 (VDDD…MDED).

It belongs to the CHZ1 family. Forms a heterotrimer with H2A.Z-H2B, stabilizing the association of the histone dimer. Also, with a lower affinity, forms a heterotrimer with H2A-H2B.

The protein localises to the nucleus. Forms a chaperone-bound H2A.Z-H2B complex that acts as a source for SWR1 complex-dependent H2A to H2A.Z histone replacement in chromatin. In Pyricularia oryzae (strain 70-15 / ATCC MYA-4617 / FGSC 8958) (Rice blast fungus), this protein is Histone H2A.Z-specific chaperone CHZ1 (CHZ1).